We begin with the raw amino-acid sequence, 57 residues long: Potassium channel toxin alpha-KTx 26.3 (57 aa).

A signal peptide spans 1–15 (MSGLSVFILIALVLS). The propeptide occupies 16–24 (VIIDVLNNS). 3 cysteine pairs are disulfide-bonded: Cys30/Cys48, Cys34/Cys53, and Cys38/Cys55.

The protein belongs to the short scorpion toxin superfamily. Potassium channel inhibitor family. Alpha-KTx 26 subfamily. Expressed by the venom gland.

Its subcellular location is the secreted. Functionally, recombinant toxin that reversibly inhibits the potassium current of mKv1.3/KCNA3 channel stably expressed in COS7 cells (IC(50)=150 nM). The protein is Potassium channel toxin alpha-KTx 26.3 of Mesobuthus gibbosus (Mediterranean checkered scorpion).